The following is a 148-amino-acid chain: Large ribosomal subunit protein uL15 (148 aa).

The interval Met-1 to Phe-50 is disordered. Residues Arg-21–Ser-31 are compositionally biased toward gly residues.

It belongs to the universal ribosomal protein uL15 family. As to quaternary structure, part of the 50S ribosomal subunit.

Its function is as follows. Binds to the 23S rRNA. This chain is Large ribosomal subunit protein uL15, found in Bacteroides fragilis (strain ATCC 25285 / DSM 2151 / CCUG 4856 / JCM 11019 / LMG 10263 / NCTC 9343 / Onslow / VPI 2553 / EN-2).